The sequence spans 546 residues: Chaperonin GroEL 2 (546 aa).

Residues 30–33 (TLGP), K51, 87–91 (DGTTT), G415, 479–481 (NAA), and D495 each bind ATP. The segment at 526 to 546 (KEDAPMPGGMPGGMGGMGMDM) is disordered. A compositionally biased stretch (gly residues) spans 534-546 (GMPGGMGGMGMDM).

Belongs to the chaperonin (HSP60) family. In terms of assembly, forms a cylinder of 14 subunits composed of two heptameric rings stacked back-to-back. Interacts with the co-chaperonin GroES.

Its subcellular location is the cytoplasm. It carries out the reaction ATP + H2O + a folded polypeptide = ADP + phosphate + an unfolded polypeptide.. Its function is as follows. Together with its co-chaperonin GroES, plays an essential role in assisting protein folding. The GroEL-GroES system forms a nano-cage that allows encapsulation of the non-native substrate proteins and provides a physical environment optimized to promote and accelerate protein folding. This is Chaperonin GroEL 2 from Burkholderia lata (strain ATCC 17760 / DSM 23089 / LMG 22485 / NCIMB 9086 / R18194 / 383).